The sequence spans 266 residues: Glucosamine-6-phosphate deaminase (266 aa).

Catalysis depends on aspartate 72, which acts as the Proton acceptor; for enolization step. Aspartate 141 functions as the For ring-opening step in the catalytic mechanism. The active-site Proton acceptor; for ring-opening step is the histidine 143. Glutamate 148 (for ring-opening step) is an active-site residue.

Belongs to the glucosamine/galactosamine-6-phosphate isomerase family. NagB subfamily. As to quaternary structure, homohexamer.

The catalysed reaction is alpha-D-glucosamine 6-phosphate + H2O = beta-D-fructose 6-phosphate + NH4(+). It participates in amino-sugar metabolism; N-acetylneuraminate degradation; D-fructose 6-phosphate from N-acetylneuraminate: step 5/5. Allosterically activated by N-acetylglucosamine 6-phosphate (GlcNAc6P). Functionally, catalyzes the reversible isomerization-deamination of glucosamine 6-phosphate (GlcN6P) to form fructose 6-phosphate (Fru6P) and ammonium ion. The polypeptide is Glucosamine-6-phosphate deaminase (Klebsiella pneumoniae subsp. pneumoniae (strain ATCC 700721 / MGH 78578)).